The chain runs to 220 residues: Deoxyribose-phosphate aldolase (220 aa).

Asp89 functions as the Proton donor/acceptor in the catalytic mechanism. Lys151 serves as the catalytic Schiff-base intermediate with acetaldehyde. Residue Lys180 is the Proton donor/acceptor of the active site.

The protein belongs to the DeoC/FbaB aldolase family. DeoC type 1 subfamily.

The protein localises to the cytoplasm. The enzyme catalyses 2-deoxy-D-ribose 5-phosphate = D-glyceraldehyde 3-phosphate + acetaldehyde. Its pathway is carbohydrate degradation; 2-deoxy-D-ribose 1-phosphate degradation; D-glyceraldehyde 3-phosphate and acetaldehyde from 2-deoxy-alpha-D-ribose 1-phosphate: step 2/2. Catalyzes a reversible aldol reaction between acetaldehyde and D-glyceraldehyde 3-phosphate to generate 2-deoxy-D-ribose 5-phosphate. The sequence is that of Deoxyribose-phosphate aldolase from Deinococcus radiodurans (strain ATCC 13939 / DSM 20539 / JCM 16871 / CCUG 27074 / LMG 4051 / NBRC 15346 / NCIMB 9279 / VKM B-1422 / R1).